The sequence spans 460 residues: tRNA modification GTPase MnmE (460 aa).

(6S)-5-formyl-5,6,7,8-tetrahydrofolate contacts are provided by arginine 22, glutamate 87, and arginine 126. The TrmE-type G domain occupies 222 to 381; that stretch reads GLKTAIIGKP…LENTIYNLVF (160 aa). Residue asparagine 232 coordinates K(+). GTP-binding positions include 232–237, 251–257, and 276–279; these read NVGKSS, TDIPGTT, and DTAG. Position 236 (serine 236) interacts with Mg(2+). Threonine 251, isoleucine 253, and threonine 256 together coordinate K(+). Threonine 257 contacts Mg(2+). Residue lysine 460 participates in (6S)-5-formyl-5,6,7,8-tetrahydrofolate binding.

It belongs to the TRAFAC class TrmE-Era-EngA-EngB-Septin-like GTPase superfamily. TrmE GTPase family. In terms of assembly, homodimer. Heterotetramer of two MnmE and two MnmG subunits. K(+) is required as a cofactor.

The protein localises to the cytoplasm. Exhibits a very high intrinsic GTPase hydrolysis rate. Involved in the addition of a carboxymethylaminomethyl (cmnm) group at the wobble position (U34) of certain tRNAs, forming tRNA-cmnm(5)s(2)U34. The chain is tRNA modification GTPase MnmE from Thermoanaerobacter sp. (strain X514).